The chain runs to 1202 residues: Liprin-alpha-1 (1202 aa).

The disordered stretch occupies residues 1–33 (MMCEVMPTISEAEGPPGGGGGHGSGSPSQPDAD). Gly residues predominate over residues 15–24 (PPGGGGGHGS). A coiled-coil region spans residues 34–141 (SHFEQLMVSM…VSRHERSLRM (108 aa)). Position 150 is a phosphoserine (serine 150). Positions 176-214 (EKVRERLRVALERCSLLEEELGATHKELMILKEQNNQKK) form a coiled coil. Disordered stretches follow at residues 224–245 (NHEQ…SLSH) and 426–446 (KNQE…HNKR). Threonine 230 is subject to Phosphothreonine. Phosphoserine is present on residues serine 239, serine 242, and serine 244. 2 coiled-coil regions span residues 249-521 (LAKV…GASL) and 623-669 (ADAH…SGSL). Serine 448 carries the post-translational modification Phosphoserine. A compositionally biased stretch (basic and acidic residues) spans 651–662 (ENTEQRAEEIES). The tract at residues 651–855 (ENTEQRAEEI…SKLGGQAEKN (205 aa)) is disordered. Serine 666, serine 668, and serine 693 each carry phosphoserine. A compositionally biased stretch (low complexity) spans 686-700 (ASSLASSSPPGSGRS). The span at 725–736 (SREEVRDDKTTI) shows a compositional bias: basic and acidic residues. The residue at position 761 (threonine 761) is a Phosphothreonine. Residues 762-771 (VSHEDIRDIR) are compositionally biased toward basic and acidic residues. Serine 763 bears the Phosphoserine mark. A compositionally biased stretch (polar residues) spans 832 to 841 (VSETDNSSQD). Positions 847 to 871 (KLGGQAEKNRKLQKKHELLEEARRQ) form a coiled coil. SAM domains follow at residues 878-944 (WDGP…IMSL), 963-1027 (NHEW…LRRL), and 1051-1120 (WSND…LLVM). The stretch at 1021–1050 (IMCLRRLNYDRKELERKREESQSEIKDVLV) forms a coiled coil. Serine 1133 is subject to Phosphoserine. Residue threonine 1159 is modified to Phosphothreonine. Residues 1163–1202 (NFRVTSSMSSPSMQPKKMQMDGNVSGTQRLDSATVRTYSC) are disordered. Low complexity predominate over residues 1168–1179 (SSMSSPSMQPKK). Positions 1184–1202 (GNVSGTQRLDSATVRTYSC) are enriched in polar residues.

It belongs to the liprin family. Liprin-alpha subfamily. As to quaternary structure, homodimer. Interacts with PTPRF (via D2 domain). Part of a cortical microtubule stabilization complex (CMSC) composed of KANK1, PPFIA1, PPFIBP1, ERC1/ELKS, PHLDB2/LL5beta, CLASPs, KIF21A and possibly additional interactors; within CMSCs KANK1 and PHLDB2/LL5beta seem to be the core components for recruiting microtubule-binding proteins KIF21A and CLASPs, whereas PPFIA1, PPFIBP1 and ERC1/ELKS serve as scaffolds for protein clustering. Ubiquitous.

It localises to the cytoplasm. Its subcellular location is the cell cortex. May regulate the disassembly of focal adhesions. May localize receptor-like tyrosine phosphatases type 2A at specific sites on the plasma membrane, possibly regulating their interaction with the extracellular environment and their association with substrates. The chain is Liprin-alpha-1 (PPFIA1) from Homo sapiens (Human).